Reading from the N-terminus, the 480-residue chain is MPAVKIGIIGAGSAVFSLRLVSDLCKTPGLSGSTVTLMDIDEERLDAVLTIAKKYVEEVGADLKFEKTTSVDEAIADADFVINTAMVGGHTYLEKVRRISEKYGYYRGIDAQEFNMVSDYYTFSNYNQLKYFVDIARKIERLSPKAWYSAAANPVFEGTTLVTRTVPIKAVGFCHGHYGVMEIIEKLGLERKQVDWQVAGVNHGIWLNRFRYNGEDAYPLLPRWISEKSKDWKPENPFNDQLSPAAIDMYKFYGVMPIGDTVRNASWRYHRDLETKKRWYGEPWGGADSEIGWKWYQDTLGKVTDITKKVAKFIKENPALKLSDLGSVLGKDLSEKQFVLEVEKILDPEKKSGEQHISFHDALLNDNRSRFVINIPNKGIIQGIDDDVVVEVPAVVDRDGIHPEKIDPPLPERVVKYYLRPRIMRMEMALEAFLTGDIRIIKEVLYRDPRTKSDEQVEKVIEEILSLPENEEMRKNYLKK.

NAD(+) is bound at residue 4 to 70; the sequence is VKIGIIGAGS…ADLKFEKTTS (67 aa). Substrate contacts are provided by Asp-119 and Asn-153. A Mn(2+)-binding site is contributed by Cys-174. The active-site Proton donor is the His-175. Position 203 (His-203) interacts with Mn(2+). Asp-260 acts as the Proton acceptor in catalysis.

This sequence belongs to the glycosyl hydrolase 4 family. Homodimer. NAD(+) serves as cofactor. Requires Mn(2+) as cofactor.

It carries out the reaction Hydrolysis of terminal, non-reducing (1-&gt;4)-linked alpha-D-glucose residues with release of alpha-D-glucose.. With respect to regulation, inhibited by EDTA in vitro. In terms of biological role, is able to hydrolyze diverse types of alpha-glycoside bonds in di- and trisaccharides: alpha-1,4 bonds of maltose and maltotriose, alpha-1,1 bonds of trehalose, alpha-1,2 bonds of sucrose, alpha-1,3 bonds of turanose and melizitose, alpha-1,6 bonds of isomaltose and melibiose. AglA is not specific with respect to the configuration at the C-4 position of its substrates because it also possesses alpha-galactosidase activity. Acts on the substrate from the non-reducing end of the chain. The activity of AglA drops with increasing length of the saccharide chain. Does not hydrolyze alpha-, beta-, and gamma-cyclodextrins or polysaccharides (starch, pullulan, amylose, amylopectin, glycogen). Does not cleave beta-glycosidic bonds in di-, oligo-, or polysaccharides. This is Alpha-glucosidase (aglA) from Thermotoga neapolitana.